The primary structure comprises 126 residues: Fluoride-specific ion channel FluC (126 aa).

The next 3 membrane-spanning stretches (helical) occupy residues 35 to 55 (WWTL…IGLL), 71 to 91 (VGML…WLLF), and 101 to 121 (LYVV…MILI). Residues Gly-75 and Thr-78 each contribute to the Na(+) site.

This sequence belongs to the fluoride channel Fluc/FEX (TC 1.A.43) family.

It localises to the cell inner membrane. The catalysed reaction is fluoride(in) = fluoride(out). Na(+) is not transported, but it plays an essential structural role and its presence is essential for fluoride channel function. Its function is as follows. Fluoride-specific ion channel. Important for reducing fluoride concentration in the cell, thus reducing its toxicity. The chain is Fluoride-specific ion channel FluC from Sphingopyxis alaskensis (strain DSM 13593 / LMG 18877 / RB2256) (Sphingomonas alaskensis).